The following is a 305-amino-acid chain: UDP-3-O-acyl-N-acetylglucosamine deacetylase (305 aa).

Positions 79, 238, and 242 each coordinate Zn(2+). The Proton donor role is filled by histidine 265.

It belongs to the LpxC family. Requires Zn(2+) as cofactor.

It catalyses the reaction a UDP-3-O-[(3R)-3-hydroxyacyl]-N-acetyl-alpha-D-glucosamine + H2O = a UDP-3-O-[(3R)-3-hydroxyacyl]-alpha-D-glucosamine + acetate. It participates in glycolipid biosynthesis; lipid IV(A) biosynthesis; lipid IV(A) from (3R)-3-hydroxytetradecanoyl-[acyl-carrier-protein] and UDP-N-acetyl-alpha-D-glucosamine: step 2/6. Catalyzes the hydrolysis of UDP-3-O-myristoyl-N-acetylglucosamine to form UDP-3-O-myristoylglucosamine and acetate, the committed step in lipid A biosynthesis. The polypeptide is UDP-3-O-acyl-N-acetylglucosamine deacetylase (Citrobacter koseri (strain ATCC BAA-895 / CDC 4225-83 / SGSC4696)).